A 176-amino-acid polypeptide reads, in one-letter code: CDP-archaeol synthase (176 aa).

Helical transmembrane passes span Phe12–Leu32, Gly60–Cys80, Ile85–Ile105, Pro118–Ile138, and Phe141–Ile161.

The protein belongs to the CDP-archaeol synthase family. Mg(2+) serves as cofactor.

The protein resides in the cell membrane. The catalysed reaction is 2,3-bis-O-(geranylgeranyl)-sn-glycerol 1-phosphate + CTP + H(+) = CDP-2,3-bis-O-(geranylgeranyl)-sn-glycerol + diphosphate. The protein operates within membrane lipid metabolism; glycerophospholipid metabolism. Its function is as follows. Catalyzes the formation of CDP-2,3-bis-(O-geranylgeranyl)-sn-glycerol (CDP-archaeol) from 2,3-bis-(O-geranylgeranyl)-sn-glycerol 1-phosphate (DGGGP) and CTP. This reaction is the third ether-bond-formation step in the biosynthesis of archaeal membrane lipids. The polypeptide is CDP-archaeol synthase (Staphylothermus marinus (strain ATCC 43588 / DSM 3639 / JCM 9404 / F1)).